The sequence spans 48 residues: Small polypeptide DEVIL 19 (48 aa).

The interval 13 to 44 (AFTSKCVSLVKEQRARLYILRRCATMLCCWYI) is required for DVL/RTFL small polypeptide activity. The helical transmembrane segment at 25–42 (QRARLYILRRCATMLCCW) threads the bilayer.

The protein belongs to the DVL/RTFL small polypeptides family.

It localises to the cell membrane. Small polypeptide acting as a regulatory molecule which coordinates cellular responses required for differentiation, growth and development, probably by restricting polar cell proliferation in lateral organs and coordinating socket cell recruitment and differentiation at trichome sites. The polypeptide is Small polypeptide DEVIL 19 (Arabidopsis thaliana (Mouse-ear cress)).